A 432-amino-acid polypeptide reads, in one-letter code: Enolase (432 aa).

Glutamine 167 contacts (2R)-2-phosphoglycerate. Catalysis depends on glutamate 209, which acts as the Proton donor. Aspartate 246, glutamate 290, and aspartate 317 together coordinate Mg(2+). Lysine 342, arginine 371, serine 372, and lysine 393 together coordinate (2R)-2-phosphoglycerate. Catalysis depends on lysine 342, which acts as the Proton acceptor.

The protein belongs to the enolase family. In terms of assembly, component of the RNA degradosome, a multiprotein complex involved in RNA processing and mRNA degradation. It depends on Mg(2+) as a cofactor.

It localises to the cytoplasm. The protein resides in the secreted. Its subcellular location is the cell surface. It catalyses the reaction (2R)-2-phosphoglycerate = phosphoenolpyruvate + H2O. Its pathway is carbohydrate degradation; glycolysis; pyruvate from D-glyceraldehyde 3-phosphate: step 4/5. Catalyzes the reversible conversion of 2-phosphoglycerate (2-PG) into phosphoenolpyruvate (PEP). It is essential for the degradation of carbohydrates via glycolysis. In Salmonella agona (strain SL483), this protein is Enolase.